Here is a 136-residue protein sequence, read N- to C-terminus: Small ribosomal subunit protein uS19 (136 aa).

The tract at residues 117–136 is disordered; sequence VQHGDPGMGATRSSMFVPLK.

The protein belongs to the universal ribosomal protein uS19 family.

In terms of biological role, protein S19 forms a complex with S13 that binds strongly to the 16S ribosomal RNA. In Methanobrevibacter smithii (strain ATCC 35061 / DSM 861 / OCM 144 / PS), this protein is Small ribosomal subunit protein uS19.